The chain runs to 100 residues: Urease subunit gamma (100 aa).

The protein belongs to the urease gamma subunit family. Heterotrimer of UreA (gamma), UreB (beta) and UreC (alpha) subunits. Three heterotrimers associate to form the active enzyme.

It is found in the cytoplasm. The catalysed reaction is urea + 2 H2O + H(+) = hydrogencarbonate + 2 NH4(+). The protein operates within nitrogen metabolism; urea degradation; CO(2) and NH(3) from urea (urease route): step 1/1. The chain is Urease subunit gamma from Burkholderia cenocepacia (strain ATCC BAA-245 / DSM 16553 / LMG 16656 / NCTC 13227 / J2315 / CF5610) (Burkholderia cepacia (strain J2315)).